The following is a 538-amino-acid chain: tRNA-2-methylthio-N(6)-dimethylallyladenosine synthase (538 aa).

Positions 1–23 (MNEEQRLGRNGNTDAVSTKEAGS) are disordered. Positions 95–213 (KKFLVRTYGC…LPHLLRNALF (119 aa)) constitute an MTTase N-terminal domain. The [4Fe-4S] cluster site is built by C104, C140, C174, C250, C254, and C257. The Radical SAM core domain maps to 236-466 (REGKTQAWVN…NALVNDISAQ (231 aa)). Positions 469–532 (LEYQDKVVEV…TWSLNGEMVE (64 aa)) constitute a TRAM domain.

The protein belongs to the methylthiotransferase family. MiaB subfamily. In terms of assembly, monomer. [4Fe-4S] cluster is required as a cofactor.

It is found in the cytoplasm. The enzyme catalyses N(6)-dimethylallyladenosine(37) in tRNA + (sulfur carrier)-SH + AH2 + 2 S-adenosyl-L-methionine = 2-methylsulfanyl-N(6)-dimethylallyladenosine(37) in tRNA + (sulfur carrier)-H + 5'-deoxyadenosine + L-methionine + A + S-adenosyl-L-homocysteine + 2 H(+). Catalyzes the methylthiolation of N6-(dimethylallyl)adenosine (i(6)A), leading to the formation of 2-methylthio-N6-(dimethylallyl)adenosine (ms(2)i(6)A) at position 37 in tRNAs that read codons beginning with uridine. The chain is tRNA-2-methylthio-N(6)-dimethylallyladenosine synthase from Halalkalibacterium halodurans (strain ATCC BAA-125 / DSM 18197 / FERM 7344 / JCM 9153 / C-125) (Bacillus halodurans).